The sequence spans 538 residues: UNC93-like protein (538 aa).

Asn45 is a glycosylation site (N-linked (GlcNAc...) asparagine). The next 5 membrane-spanning stretches (helical) occupy residues 46-66 (ISII…TANL), 80-100 (SLSA…TLII), 105-125 (VKWT…FQLF), 128-148 (FYTL…MWAS), and 170-190 (AIIV…ELWG). Asn210 is a glycosylation site (N-linked (GlcNAc...) asparagine). 7 helical membrane-spanning segments follow: residues 244 to 264 (IFEI…IIAF), 305 to 325 (LLIP…ADFT), 338 to 358 (IGFV…LFGS), 366 to 386 (TPII…ELFW), 394 to 414 (IIFY…QTQI), 435 to 455 (LWES…CTQM), and 457 to 477 (LYIL…VEIL).

This sequence belongs to the unc-93 family.

It localises to the membrane. This chain is UNC93-like protein, found in Drosophila melanogaster (Fruit fly).